A 106-amino-acid polypeptide reads, in one-letter code: Valine dehydrogenase (106 aa).

Residue lysine 91 is part of the active site.

This sequence belongs to the Glu/Leu/Phe/Val dehydrogenases family. Homodimer.

The protein localises to the cytoplasm. It carries out the reaction L-valine + NAD(+) + H2O = 3-methyl-2-oxobutanoate + NH4(+) + NADH + H(+). Its pathway is amino-acid degradation; L-valine degradation. Functionally, oxidative deamination of branched-chain amino acids. The catabolism of valine is the major source of fatty acid precursors for macrolide biosynthesis and a vital source of antibiotic precursors. This is Valine dehydrogenase (vdh) from Streptomyces ambofaciens.